A 268-amino-acid chain; its full sequence is Small ribosomal subunit protein mS43 (268 aa).

Residues 1 to 23 (MLNTGLRKGLALSPITHLLKRCS) constitute a mitochondrion transit peptide.

This sequence belongs to the mitochondrion-specific ribosomal protein mS43 family. As to quaternary structure, component of the mitochondrial small ribosomal subunit (mt-SSU). Mature yeast 74S mitochondrial ribosomes consist of a small (37S) and a large (54S) subunit. The 37S small subunit contains a 15S ribosomal RNA (15S mt-rRNA) and at least 32 different proteins. The 54S large subunit contains a 21S rRNA (21S mt-rRNA) and at least 45 different proteins. mS43 forms a dimer with mS42, building a large protuberance adjacent to the mRNA channel exit in the mt-SSU body.

Its subcellular location is the mitochondrion. Component of the mitochondrial ribosome (mitoribosome), a dedicated translation machinery responsible for the synthesis of mitochondrial genome-encoded proteins, including at least some of the essential transmembrane subunits of the mitochondrial respiratory chain. The mitoribosomes are attached to the mitochondrial inner membrane and translation products are cotranslationally integrated into the membrane. In Schizosaccharomyces pombe (strain 972 / ATCC 24843) (Fission yeast), this protein is Small ribosomal subunit protein mS43.